The sequence spans 141 residues: Small ribosomal subunit protein bS6 (141 aa).

The segment at 96-141 (VTGQSEMLKAEENRSERRERRERPEHADSAEGDDSNDSDSSDNADE) is disordered. Basic and acidic residues predominate over residues 103 to 124 (LKAEENRSERRERRERPEHADS). Residues 125–141 (AEGDDSNDSDSSDNADE) are compositionally biased toward acidic residues.

It belongs to the bacterial ribosomal protein bS6 family.

Binds together with bS18 to 16S ribosomal RNA. The chain is Small ribosomal subunit protein bS6 from Pseudomonas putida (strain ATCC 700007 / DSM 6899 / JCM 31910 / BCRC 17059 / LMG 24140 / F1).